A 552-amino-acid polypeptide reads, in one-letter code: uncharacterized protein (552 aa).

The DhaL domain maps to 8 to 200 (KLFAEMIIQG…LAIVYAGFLK (193 aa)).

This is an uncharacterized protein from Staphylococcus saprophyticus subsp. saprophyticus (strain ATCC 15305 / DSM 20229 / NCIMB 8711 / NCTC 7292 / S-41).